Reading from the N-terminus, the 180-residue chain is Sperm protein associated with the nucleus on the X chromosome N2 (180 aa).

Disordered stretches follow at residues Met1 to Thr46 and Asn64 to Asp180. The span at Gly10–Glu26 shows a compositional bias: basic and acidic residues. The segment covering Gln82–Ser169 has biased composition (acidic residues). Low complexity predominate over residues Ser170–Asp180.

It belongs to the SPAN-X family.

The protein is Sperm protein associated with the nucleus on the X chromosome N2 (SPANXN2) of Homo sapiens (Human).